The chain runs to 396 residues: Methionine import ATP-binding protein MetN 2 (396 aa).

Positions 41–280 (VSFELVGKVF…PRHGATRALL (240 aa)) constitute an ABC transporter domain. 77–84 (GRSGAGKS) is an ATP binding site.

The protein belongs to the ABC transporter superfamily. Methionine importer (TC 3.A.1.24) family. As to quaternary structure, the complex is composed of two ATP-binding proteins (MetN), two transmembrane proteins (MetI) and a solute-binding protein (MetQ).

It localises to the cell inner membrane. It carries out the reaction L-methionine(out) + ATP + H2O = L-methionine(in) + ADP + phosphate + H(+). The catalysed reaction is D-methionine(out) + ATP + H2O = D-methionine(in) + ADP + phosphate + H(+). In terms of biological role, part of the ABC transporter complex MetNIQ involved in methionine import. Responsible for energy coupling to the transport system. This is Methionine import ATP-binding protein MetN 2 from Burkholderia pseudomallei (strain 1710b).